The sequence spans 247 residues: 2-dehydro-3-deoxy-phosphogluconate aldolase (247 aa).

The protein belongs to the DagF family.

The catalysed reaction is 2-dehydro-3-deoxy-6-phospho-D-gluconate = D-glyceraldehyde 3-phosphate + pyruvate. Involved in the catabolism of D-glucosaminate. Catalyzes the conversion of keto-3-deoxygluconate 6-phosphate (KDGP) to yield pyruvate and glyceraldehyde-3-phosphate. The chain is 2-dehydro-3-deoxy-phosphogluconate aldolase from Salmonella typhimurium (strain 14028s / SGSC 2262).